Consider the following 256-residue polypeptide: MNNIWWQTKGQGNVHLVLLHGWGLNAEVWRCIDEELSSHFTLHLVDLPGFGRSRGFGAMSLADMAEVVLRQAPDKAIWLGWSLGGLVASQIALTHPERVQAIVTVASSPCFSARDEWPGIKPDVLAGFQQQLSDDFQRTVERFLALQTMGTETARQDARALKKTVLALPMPKVDVLNGGLEILKTVDLRQPLQNVSMPFLRLYGYLDGLVPRKVVPMLDKLWPHSESYIFAKAAHAPFISHPDEFCHLLVALKQRV.

Residues 15 to 242 (HLVLLHGWGL…AAHAPFISHP (228 aa)) form the AB hydrolase-1 domain. Residues Trp22, 82-83 (SL), and 143-147 (FLALQ) each bind substrate. The active-site Nucleophile is Ser82. Residues Asp207 and His235 contribute to the active site. His235 lines the substrate pocket.

This sequence belongs to the AB hydrolase superfamily. Carboxylesterase BioH family. Monomer.

The protein localises to the cytoplasm. It carries out the reaction 6-carboxyhexanoyl-[ACP] methyl ester + H2O = 6-carboxyhexanoyl-[ACP] + methanol + H(+). It functions in the pathway cofactor biosynthesis; biotin biosynthesis. Its function is as follows. The physiological role of BioH is to remove the methyl group introduced by BioC when the pimeloyl moiety is complete. It allows to synthesize pimeloyl-ACP via the fatty acid synthetic pathway through the hydrolysis of the ester bonds of pimeloyl-ACP esters. This chain is Pimeloyl-[acyl-carrier protein] methyl ester esterase, found in Escherichia fergusonii (strain ATCC 35469 / DSM 13698 / CCUG 18766 / IAM 14443 / JCM 21226 / LMG 7866 / NBRC 102419 / NCTC 12128 / CDC 0568-73).